Reading from the N-terminus, the 491-residue chain is Aspartyl/glutamyl-tRNA(Asn/Gln) amidotransferase subunit B (491 aa).

Belongs to the GatB/GatE family. GatB subfamily. In terms of assembly, heterotrimer of A, B and C subunits.

The catalysed reaction is L-glutamyl-tRNA(Gln) + L-glutamine + ATP + H2O = L-glutaminyl-tRNA(Gln) + L-glutamate + ADP + phosphate + H(+). It carries out the reaction L-aspartyl-tRNA(Asn) + L-glutamine + ATP + H2O = L-asparaginyl-tRNA(Asn) + L-glutamate + ADP + phosphate + 2 H(+). Its function is as follows. Allows the formation of correctly charged Asn-tRNA(Asn) or Gln-tRNA(Gln) through the transamidation of misacylated Asp-tRNA(Asn) or Glu-tRNA(Gln) in organisms which lack either or both of asparaginyl-tRNA or glutaminyl-tRNA synthetases. The reaction takes place in the presence of glutamine and ATP through an activated phospho-Asp-tRNA(Asn) or phospho-Glu-tRNA(Gln). This is Aspartyl/glutamyl-tRNA(Asn/Gln) amidotransferase subunit B from Paraburkholderia phymatum (strain DSM 17167 / CIP 108236 / LMG 21445 / STM815) (Burkholderia phymatum).